We begin with the raw amino-acid sequence, 840 residues long: Phosphatidylglycerol lysyltransferase (840 aa).

The Cytoplasmic segment spans residues 1–8; the sequence is MTQELKSK. A helical membrane pass occupies residues 9-29; that stretch reads LLSFFKFIFATALFIFVIFTL. Over 30–52 the chain is Extracellular; the sequence is YRELSHINFKETFIQFGKINRLW. A helical transmembrane segment spans residues 53-73; that stretch reads LVLLFAGGGLSLILLSLYDII. The Cytoplasmic portion of the chain corresponds to 74-89; the sequence is LVKALKLKMPLIRVFR. Residues 90 to 110 traverse the membrane as a helical segment; the sequence is VSYIINALNSIIGFGGFIGAG. At 111–129 the chain is on the extracellular side; it reads VRAFVYKNYTNDTKKLVQY. Residues 130–150 form a helical membrane-spanning segment; sequence ISIILVSMLTGLSLLSILVVL. Topologically, residues 151-161 are cytoplasmic; the sequence is RIFNASHMIDE. A helical membrane pass occupies residues 162-182; that stretch reads ISWVRWILYIVALFLPIFIFY. At 183 to 200 the chain is on the extracellular side; the sequence is TVARPVDRNNRYMGVYCT. The chain crosses the membrane as a helical span at residues 201 to 221; sequence VVSCVEWMAAATVLYFAALIV. At 222 to 229 the chain is on the cytoplasmic side; it reads DIHISFMT. The chain crosses the membrane as a helical span at residues 230-250; it reads FVGIFVIAALSGLVSFIPGGF. The Extracellular segment spans residues 251–270; that stretch reads GAFDLVVLLGLKSLGISEEK. Residues 271–291 traverse the membrane as a helical segment; sequence ILLALVLYRFAYYFVPVMIAL. The Cytoplasmic portion of the chain corresponds to 292-337; that stretch reads ILSSFEFGNTAKKYLDNSKYFIPVKDFTSFLRSYQKDILAKVPSFS. Residues 338–358 traverse the membrane as a helical segment; sequence LAILIFLTSIIFFINNLTIVY. At 359 to 366 the chain is on the extracellular side; that stretch reads DGLYDGNH. Residues 367-387 traverse the membrane as a helical segment; it reads FAYYIALAVQTSACLLLILNV. Residues 388-392 are Cytoplasmic-facing; the sequence is RGIYK. Residues 393-413 traverse the membrane as a helical segment; the sequence is GSRRAIIYAFISIILIASATI. Residues 414–415 are Extracellular-facing; that stretch reads YT. A helical transmembrane segment spans residues 416–436; that stretch reads YASFLLLSWLIIIFVLLILAY. The Cytoplasmic portion of the chain corresponds to 437–450; the sequence is QRAQVLKRPLRFKK. The helical transmembrane segment at 451-471 threads the bilayer; the sequence is LAVMLLLSIFILYLNHILISG. The Extracellular segment spans residues 472-489; that stretch reads TLYALDVYHIEIDTSLLR. A helical transmembrane segment spans residues 490–510; that stretch reads YYFWMTIVIIMLLVGVIAWLF. Residues 511–840 lie on the Cytoplasmic side of the membrane; sequence DYKYKCPHHS…LKVMRVIRHK (330 aa).

This sequence belongs to the LPG synthase family.

It localises to the cell membrane. It carries out the reaction L-lysyl-tRNA(Lys) + a 1,2-diacyl-sn-glycero-3-phospho-(1'-sn-glycerol) = a 1,2-diacyl-sn-glycero-3-phospho-1'-(3'-O-L-lysyl)-sn-glycerol + tRNA(Lys). In terms of biological role, catalyzes the transfer of a lysyl group from L-lysyl-tRNA(Lys) to membrane-bound phosphatidylglycerol (PG), which produces lysylphosphatidylglycerol (LPG), a major component of the bacterial membrane with a positive net charge. LPG synthesis contributes to bacterial virulence as it is involved in the resistance mechanism against cationic antimicrobial peptides (CAMP) produces by the host's immune system (defensins, cathelicidins) and by the competing microorganisms (bacteriocins). In fact, the modification of anionic phosphatidylglycerol with positively charged L-lysine results in repulsion of the peptides. In Staphylococcus epidermidis (strain ATCC 12228 / FDA PCI 1200), this protein is Phosphatidylglycerol lysyltransferase (mprF).